The sequence spans 337 residues: tRNA N6-adenosine threonylcarbamoyltransferase (337 aa).

Positions 111 and 115 each coordinate Fe cation. Substrate contacts are provided by residues 134–138 (LVSGG), D167, G180, and N272. D300 serves as a coordination point for Fe cation.

The protein belongs to the KAE1 / TsaD family. Fe(2+) serves as cofactor.

It localises to the cytoplasm. The enzyme catalyses L-threonylcarbamoyladenylate + adenosine(37) in tRNA = N(6)-L-threonylcarbamoyladenosine(37) in tRNA + AMP + H(+). In terms of biological role, required for the formation of a threonylcarbamoyl group on adenosine at position 37 (t(6)A37) in tRNAs that read codons beginning with adenine. Is involved in the transfer of the threonylcarbamoyl moiety of threonylcarbamoyl-AMP (TC-AMP) to the N6 group of A37, together with TsaE and TsaB. TsaD likely plays a direct catalytic role in this reaction. This chain is tRNA N6-adenosine threonylcarbamoyltransferase, found in Escherichia coli (strain SMS-3-5 / SECEC).